The following is a 136-amino-acid chain: Endonuclease II (136 aa).

In terms of domain architecture, GIY-YIG spans 32-131 (KYNVIYAIAI…IKLFNPPWNI (100 aa)).

As to quaternary structure, homotetramer. Requires Mg(2+) as cofactor.

It catalyses the reaction Endonucleolytic nicking and cleavage of cytosine-containing double-stranded DNA.. Functionally, contributes to the degradation of host DNA, permitting the scavenging of host-derived nucleotides for phage DNA synthesis. Sequence-specific endonuclease. Catalyzes nicking of the bottom strand of double-stranded DNA between the first and second base pair to the right of a top-strand CCGC motif. Does not cleave native phage DNA, which contains 5-hydroxymethylcytosine instead of cytosine. This Escherichia coli (Bacteriophage T4) protein is Endonuclease II (denA).